Reading from the N-terminus, the 467-residue chain is Probable protein phosphatase 2C 6 (467 aa).

The tract at residues 61–81 (VEDDAVAPGRGEEGGEASAVG) is disordered. Residues 149–457 (LWGHKSICGR…DNISVIVVDL (309 aa)) enclose the PPM-type phosphatase domain. Mn(2+)-binding residues include Asp-205, Gly-206, Asp-386, and Asp-448.

It belongs to the PP2C family. Interacts with PYL9. Mg(2+) is required as a cofactor. The cofactor is Mn(2+).

The protein resides in the nucleus. It is found in the cytoplasm. The protein localises to the cytosol. The enzyme catalyses O-phospho-L-seryl-[protein] + H2O = L-seryl-[protein] + phosphate. It catalyses the reaction O-phospho-L-threonyl-[protein] + H2O = L-threonyl-[protein] + phosphate. Probable protein phosphatase that may function in abscisic acid (ABA) signaling. This is Probable protein phosphatase 2C 6 from Oryza sativa subsp. japonica (Rice).